The following is a 109-amino-acid chain: Class I hydrophobin G (109 aa).

Positions 1-19 (MRLSILSVFSLVGAGMVSA) are cleaved as a signal peptide. 4 disulfides stabilise this stretch: cysteine 36/cysteine 90, cysteine 42/cysteine 84, cysteine 43/cysteine 76, and cysteine 91/cysteine 105.

This sequence belongs to the fungal hydrophobin family.

It localises to the secreted. It is found in the cell wall. In terms of biological role, aerial growth, conidiation, and dispersal of filamentous fungi in the environment rely upon a capability of their secreting small amphipathic proteins called hydrophobins (HPBs) with low sequence identity. Class I can self-assemble into an outermost layer of rodlet bundles on aerial cell surfaces, conferring cellular hydrophobicity that supports fungal growth, development and dispersal; whereas Class II form highly ordered films at water-air interfaces through intermolecular interactions but contribute nothing to the rodlet structure. In P.expansum, hydrophobins contribute to germination, tolerance to cold stress and mycotoxins patulin and citrinin production. In Penicillium expansum (Blue mold rot fungus), this protein is Class I hydrophobin G.